Reading from the N-terminus, the 150-residue chain is Small ribosomal subunit protein bS6 (150 aa).

Positions 92–150 (KGINKPAKPKKTFKKTFVARKFSRDDESKTHSTEEPRRANTKSTYKKSTSFSQDNKNKK) are disordered. The span at 98–109 (AKPKKTFKKTFV) shows a compositional bias: basic residues. Residues 113 to 129 (FSRDDESKTHSTEEPRR) are compositionally biased toward basic and acidic residues. A compositionally biased stretch (low complexity) spans 132 to 141 (TKSTYKKSTS).

This sequence belongs to the bacterial ribosomal protein bS6 family.

Its function is as follows. Binds together with bS18 to 16S ribosomal RNA. The sequence is that of Small ribosomal subunit protein bS6 from Mycoplasmopsis pulmonis (strain UAB CTIP) (Mycoplasma pulmonis).